Here is a 132-residue protein sequence, read N- to C-terminus: Intraflagellar transport protein 20 homolog A (132 aa).

Positions 87-112 form a coiled coil; that stretch reads EAQQQQLYALIAEKKMQLERYRIEYD.

It is found in the golgi apparatus. The protein resides in the cis-Golgi network. It localises to the cytoplasm. Its subcellular location is the cytoskeleton. The protein localises to the microtubule organizing center. It is found in the centrosome. The protein resides in the centriole. It localises to the cell projection. Its subcellular location is the cilium. Functionally, involved in ciliary process assembly. May play a role in the trafficking of ciliary membrane proteins from the Golgi complex to the cilium. Regulates the platelet-derived growth factor receptor-alpha (PDGFRA) signaling pathway. Plays an important role in spermatogenesis, particularly spermiogenesis, when germ cells form flagella. This chain is Intraflagellar transport protein 20 homolog A (ift20-a), found in Xenopus laevis (African clawed frog).